A 210-amino-acid chain; its full sequence is Na(+)-translocating NADH-quinone reductase subunit D (210 aa).

Transmembrane regions (helical) follow at residues Phe42 to Ile62, Ile72 to Ala92, Val103 to Met123, Phe131 to Val151, and Asn178 to Val198.

Belongs to the NqrDE/RnfAE family. In terms of assembly, composed of six subunits; NqrA, NqrB, NqrC, NqrD, NqrE and NqrF.

Its subcellular location is the cell inner membrane. The catalysed reaction is a ubiquinone + n Na(+)(in) + NADH + H(+) = a ubiquinol + n Na(+)(out) + NAD(+). In terms of biological role, NQR complex catalyzes the reduction of ubiquinone-1 to ubiquinol by two successive reactions, coupled with the transport of Na(+) ions from the cytoplasm to the periplasm. NqrA to NqrE are probably involved in the second step, the conversion of ubisemiquinone to ubiquinol. The sequence is that of Na(+)-translocating NADH-quinone reductase subunit D from Aeromonas hydrophila subsp. hydrophila (strain ATCC 7966 / DSM 30187 / BCRC 13018 / CCUG 14551 / JCM 1027 / KCTC 2358 / NCIMB 9240 / NCTC 8049).